The sequence spans 450 residues: Tubulin alpha-2 chain (450 aa).

Gln11 is a GTP binding site. Lys40 is modified (N6-acetyllysine). Residues Glu71, Gly144, Thr145, Thr179, Asn206, and Asn228 each contribute to the GTP site. Glu71 is a binding site for Mg(2+). Residue Glu254 is part of the active site.

This sequence belongs to the tubulin family. Dimer of alpha and beta chains. A typical microtubule is a hollow water-filled tube with an outer diameter of 25 nm and an inner diameter of 15 nM. Alpha-beta heterodimers associate head-to-tail to form protofilaments running lengthwise along the microtubule wall with the beta-tubulin subunit facing the microtubule plus end conferring a structural polarity. Microtubules usually have 13 protofilaments but different protofilament numbers can be found in some organisms and specialized cells. Mg(2+) serves as cofactor. Undergoes a tyrosination/detyrosination cycle, the cyclic removal and re-addition of a C-terminal tyrosine residue by the enzymes tubulin tyrosine carboxypeptidase (TTCP) and tubulin tyrosine ligase (TTL), respectively. In terms of processing, acetylation of alpha chains at Lys-40 stabilizes microtubules and affects affinity and processivity of microtubule motors. This modification has a role in multiple cellular functions, ranging from cell motility, cell cycle progression or cell differentiation to intracellular trafficking and signaling.

It localises to the cytoplasm. The protein localises to the cytoskeleton. The enzyme catalyses GTP + H2O = GDP + phosphate + H(+). Its function is as follows. Tubulin is the major constituent of microtubules, a cylinder consisting of laterally associated linear protofilaments composed of alpha- and beta-tubulin heterodimers. Microtubules grow by the addition of GTP-tubulin dimers to the microtubule end, where a stabilizing cap forms. Below the cap, tubulin dimers are in GDP-bound state, owing to GTPase activity of alpha-tubulin. In Gossypium hirsutum (Upland cotton), this protein is Tubulin alpha-2 chain.